The following is a 146-amino-acid chain: Putative pre-16S rRNA nuclease (146 aa).

Belongs to the YqgF nuclease family.

It localises to the cytoplasm. In terms of biological role, could be a nuclease involved in processing of the 5'-end of pre-16S rRNA. This chain is Putative pre-16S rRNA nuclease, found in Pediococcus pentosaceus (strain ATCC 25745 / CCUG 21536 / LMG 10740 / 183-1w).